The sequence spans 278 residues: 1-acyl-sn-glycerol-3-phosphate acyltransferase beta (278 aa).

A signal peptide spans 1–23 (MELWPCLAAALLLLLLLVQLSRA). At 24–29 (AEFYAK) the chain is on the lumenal side. Residues 30-50 (VALYCALCFTVSAVASLVCLL) form a helical membrane-spanning segment. Topologically, residues 51-121 (RHGGRTVENM…PERCVQIAKR (71 aa)) are cytoplasmic. Positions 98-103 (HQSILD) match the HXXXXD motif motif. A helical membrane pass occupies residues 122–142 (ELLFLGPVGLIMYLGGVFFIN). At 143 to 278 (RQRSSTAMTV…TAGSGVQPAQ (136 aa)) the chain is on the lumenal side. Positions 172–175 (EGTR) match the EGTR motif motif.

It belongs to the 1-acyl-sn-glycerol-3-phosphate acyltransferase family. Expressed predominantly in adipose tissue, pancreas and liver.

Its subcellular location is the endoplasmic reticulum membrane. The enzyme catalyses a 1-acyl-sn-glycero-3-phosphate + an acyl-CoA = a 1,2-diacyl-sn-glycero-3-phosphate + CoA. The catalysed reaction is 1-(9Z-octadecenoyl)-sn-glycero-3-phosphate + (9Z)-octadecenoyl-CoA = 1,2-di-(9Z-octadecenoyl)-sn-glycero-3-phosphate + CoA. It carries out the reaction 1-(9Z-octadecenoyl)-sn-glycero-3-phosphate + hexadecanoyl-CoA = 1-(9Z)-octadecenoyl-2-hexadecanoyl-sn-glycero-3-phosphate + CoA. It catalyses the reaction heptadecanoyl-CoA + 1-(9Z-octadecenoyl)-sn-glycero-3-phosphate = 1-(9Z)-octadecenoyl-2-heptadecanoyl-sn-glycero-3-phosphate + CoA. The enzyme catalyses 1-(9Z-octadecenoyl)-sn-glycero-3-phosphate + (9Z,12Z)-octadecadienoyl-CoA = 1-(9Z)-octadecenoyl-2-(9Z,12Z)-octadecadienoyl-sn-glycero-3-phosphate + CoA. The catalysed reaction is 1-(9Z-octadecenoyl)-sn-glycero-3-phosphate + tetradecanoyl-CoA = 1-(9Z)-octadecenoyl-2-tetradecanoyl-sn-glycero-3-phosphate + CoA. It carries out the reaction pentadecanoyl-CoA + 1-(9Z-octadecenoyl)-sn-glycero-3-phosphate = 1-(9Z)-octadecenoyl-2-pentadecanoyl-sn-glycero-3-phosphate + CoA. It catalyses the reaction 1-hexadecanoyl-sn-glycero-3-phosphate + (9Z)-octadecenoyl-CoA = 1-hexadecanoyl-2-(9Z-octadecenoyl)-sn-glycero-3-phosphate + CoA. The enzyme catalyses 1-tetradecanoyl-sn-glycerol 3-phosphate + (9Z)-octadecenoyl-CoA = 1-tetradecanoyl-2-(9Z)-octadecenoyl-sn-glycero-3-phosphate + CoA. The catalysed reaction is 1-(9Z,12Z,15Z)-octadecatrienoyl-sn-glycero-3-phosphate + (9Z)-octadecenoyl-CoA = 1-(9Z,12Z,15Z)-octadecatrienoyl-2-(9Z)-octadecenoyl-sn-glycero-3-phosphate + CoA. It carries out the reaction 1-(6Z,9Z,12Z-octadecatrienoyl)-sn-glycero-3-phosphate + (9Z)-octadecenoyl-CoA = (6Z,9Z,12Z)-octadecatrienoyl-2-(9Z)-octadecenoyl-sn-glycero-3-phosphate + CoA. It catalyses the reaction 1-eicosanoyl-sn-glycero-3-phosphate + (9Z)-octadecenoyl-CoA = 1-eicosanoyl-2-(9Z)-octadecenoyl-sn-glycero-3-phosphate + CoA. The enzyme catalyses 1-hexadecanoyl-sn-glycero-3-phosphate + octadecanoyl-CoA = 1-hexadecanoyl-2-octadecanoyl-sn-glycero-3-phosphate + CoA. The catalysed reaction is 1-hexadecanoyl-sn-glycero-3-phosphate + (5Z,8Z,11Z,14Z)-eicosatetraenoyl-CoA = 1-hexadecanoyl-2-(5Z,8Z,11Z,14Z-eicosatetraenoyl)-sn-glycero-3-phosphate + CoA. It carries out the reaction 1-hexadecanoyl-sn-glycero-3-phosphate + hexadecanoyl-CoA = 1,2-dihexadecanoyl-sn-glycero-3-phosphate + CoA. It catalyses the reaction 1-hexadecanoyl-sn-glycero-3-phosphate + tetradecanoyl-CoA = 1-hexadecanoyl-2-tetradecanoyl-sn-glycero-3-phosphate + CoA. The enzyme catalyses (11Z)-octadecenoyl-CoA + 1-(9Z-octadecenoyl)-sn-glycero-3-phosphate = 1-(9Z)-octadecenoyl-2-(11Z)-octadecenoyl-sn-glycero-3-phosphate + CoA. It functions in the pathway phospholipid metabolism; CDP-diacylglycerol biosynthesis; CDP-diacylglycerol from sn-glycerol 3-phosphate: step 2/3. In terms of biological role, converts 1-acyl-sn-glycerol-3-phosphate (lysophosphatidic acid or LPA) into 1,2-diacyl-sn-glycerol-3-phosphate (phosphatidic acid or PA) by incorporating an acyl moiety at the sn-2 position of the glycerol backbone. The sequence is that of 1-acyl-sn-glycerol-3-phosphate acyltransferase beta (AGPAT2) from Homo sapiens (Human).